We begin with the raw amino-acid sequence, 335 residues long: Trans-3-hydroxy-L-proline dehydratase (335 aa).

Residue cysteine 91 is the Proton acceptor of the active site. Residues 92–93 (GH), aspartate 251, and 256–257 (GS) each bind substrate.

The protein belongs to the proline racemase family.

The enzyme catalyses trans-3-hydroxy-L-proline = 1-pyrroline-2-carboxylate + H2O. In terms of biological role, catalyzes the dehydration of trans-3-hydroxy-L-proline (t3LHyp) to Delta(1)-pyrroline-2-carboxylate (Pyr2C). Is likely involved in a degradation pathway that converts t3LHyp to L-proline. Displays neither trans-4-hydroxy-L-proline (t4LHyp) epimerase nor proline racemase activity. The polypeptide is Trans-3-hydroxy-L-proline dehydratase (Burkholderia ambifaria (strain ATCC BAA-244 / DSM 16087 / CCUG 44356 / LMG 19182 / AMMD) (Burkholderia cepacia (strain AMMD))).